The primary structure comprises 849 residues: Disks large homolog 3 (849 aa).

Positions 32-101 (DWQVPDPYGP…GKNTPKLNGS (70 aa)) are disordered. The segment covering 41-53 (PSGGNGASSGYGG) has biased composition (gly residues). Residues 57–69 (QTLPSQAGATPTP) show a composition bias toward polar residues. PDZ domains are found at residues 149-235 (EIVL…VRRR), 244-330 (EVNL…VAKP), and 404-484 (KIIL…AQYR). Serine 157 is modified (phosphoserine). Residues 519–589 (KRSLYVRALF…PSKKRVEKKE (71 aa)) form the SH3 domain. The Guanylate kinase-like domain maps to 659–834 (ARPVIILGPM…IYNKIKQIIE (176 aa)). Tyrosine 705 is subject to Phosphotyrosine.

It belongs to the MAGUK family. Interacts through its PDZ domains with NETO1 and APC. Interacts through its first two PDZ domains with ERBB4. Interacts through its third PDZ domain with NLGN1, and probably with NLGN2 and NLGN3. Interacts through its PDZ domains with GRIN2B and SYNGAP1. Interacts through its guanylate kinase-like domain with DLGAP1, DLGAP2, DLGAP3 and DLGAP4. Interacts with FRMPD4 (via C-terminus). Interacts with LRFN2. Interacts with LRFN1 and LRFN4. Interacts with FLTP. Interacts with DGKI (via PDZ-binding motif).

In terms of biological role, required for learning most likely through its role in synaptic plasticity following NMDA receptor signaling. This is Disks large homolog 3 (Dlg3) from Rattus norvegicus (Rat).